Consider the following 155-residue polypeptide: Small ribosomal subunit protein uS7 (155 aa).

It belongs to the universal ribosomal protein uS7 family. In terms of assembly, part of the 30S ribosomal subunit. Contacts proteins S9 and S11.

Its function is as follows. One of the primary rRNA binding proteins, it binds directly to 16S rRNA where it nucleates assembly of the head domain of the 30S subunit. Is located at the subunit interface close to the decoding center, probably blocks exit of the E-site tRNA. The polypeptide is Small ribosomal subunit protein uS7 (Chlorobium phaeobacteroides (strain DSM 266 / SMG 266 / 2430)).